Consider the following 372-residue polypeptide: Aminomethyltransferase (372 aa).

Belongs to the GcvT family. In terms of assembly, the glycine cleavage system is composed of four proteins: P, T, L and H.

It catalyses the reaction N(6)-[(R)-S(8)-aminomethyldihydrolipoyl]-L-lysyl-[protein] + (6S)-5,6,7,8-tetrahydrofolate = N(6)-[(R)-dihydrolipoyl]-L-lysyl-[protein] + (6R)-5,10-methylene-5,6,7,8-tetrahydrofolate + NH4(+). In terms of biological role, the glycine cleavage system catalyzes the degradation of glycine. The protein is Aminomethyltransferase of Burkholderia multivorans (strain ATCC 17616 / 249).